Here is a 377-residue protein sequence, read N- to C-terminus: uncharacterized protein (377 aa).

Composition is skewed to polar residues over residues 1 to 11 (MSSIQGTSGSS) and 31 to 43 (PSGQTISFSAVGK). 3 disordered regions span residues 1-43 (MSSI…AVGK), 109-141 (SSEEQLESPGVRNKSALKGTNRSNSHREEIARN), and 328-377 (SSSP…RGFQ). Residues 334–345 (EDPRSLRDRLRD) show a composition bias toward basic and acidic residues.

It belongs to the chlamydial CPn_0499/CT_392/TC_0671 family.

This is an uncharacterized protein from Chlamydia trachomatis serovar D (strain ATCC VR-885 / DSM 19411 / UW-3/Cx).